The following is a 655-amino-acid chain: Fructose-1,6-bisphosphatase class 3 (655 aa).

Belongs to the FBPase class 3 family. Mn(2+) serves as cofactor.

The catalysed reaction is beta-D-fructose 1,6-bisphosphate + H2O = beta-D-fructose 6-phosphate + phosphate. The protein operates within carbohydrate biosynthesis; gluconeogenesis. This Porphyromonas gingivalis (strain ATCC BAA-308 / W83) protein is Fructose-1,6-bisphosphatase class 3.